The chain runs to 172 residues: Molybdopterin synthase catalytic subunit (172 aa).

Position 20 is a phosphoserine (serine 20). Substrate is bound by residues 127 to 128 (HR), lysine 143, and 150 to 152 (KKE).

It belongs to the MoaE family. MOCS2B subfamily. As to quaternary structure, heterotetramer; composed of 2 small (MOCS2A) and 2 large (MOCS2B) subunits.

It is found in the cytoplasm. The protein resides in the cytosol. It catalyses the reaction 2 [molybdopterin-synthase sulfur-carrier protein]-C-terminal-Gly-aminoethanethioate + cyclic pyranopterin phosphate + H2O = molybdopterin + 2 [molybdopterin-synthase sulfur-carrier protein]-C-terminal Gly-Gly + 2 H(+). The protein operates within cofactor biosynthesis; molybdopterin biosynthesis. In terms of biological role, catalytic subunit of the molybdopterin synthase complex, a complex that catalyzes the conversion of precursor Z into molybdopterin. Acts by mediating the incorporation of 2 sulfur atoms from thiocarboxylated MOCS2A into precursor Z to generate a dithiolene group. This is Molybdopterin synthase catalytic subunit from Pongo abelii (Sumatran orangutan).